The primary structure comprises 97 residues: YcgL domain-containing protein PputGB1_4120 (97 aa).

One can recognise a YcgL domain in the interval 3 to 87 (RICSIYKSPR…AEDEYIEHLP (85 aa)).

This chain is YcgL domain-containing protein PputGB1_4120, found in Pseudomonas putida (strain GB-1).